A 130-amino-acid chain; its full sequence is Guanylate kinase (130 aa).

The Guanylate kinase-like domain maps to 1-130; that stretch reads KIFEDPTTSY…EKIQSRVNEA (130 aa).

This sequence belongs to the guanylate kinase family.

It localises to the cytoplasm. The enzyme catalyses GMP + ATP = GDP + ADP. Functionally, essential for recycling GMP and indirectly, cGMP. This is Guanylate kinase (gmk) from Staphylococcus epidermidis.